Consider the following 114-residue polypeptide: Ig heavy chain V region GOM (114 aa).

One can recognise an Ig-like domain in the interval Glu1–Val112.

The polypeptide is Ig heavy chain V region GOM (Canis lupus familiaris (Dog)).